Consider the following 479-residue polypeptide: UDP-N-acetylmuramate--L-alanine ligase (479 aa).

Residue 115–121 (GTHGKTT) coordinates ATP.

Belongs to the MurCDEF family.

Its subcellular location is the cytoplasm. It carries out the reaction UDP-N-acetyl-alpha-D-muramate + L-alanine + ATP = UDP-N-acetyl-alpha-D-muramoyl-L-alanine + ADP + phosphate + H(+). Its pathway is cell wall biogenesis; peptidoglycan biosynthesis. Cell wall formation. In Acidiphilium cryptum (strain JF-5), this protein is UDP-N-acetylmuramate--L-alanine ligase.